Reading from the N-terminus, the 46-residue chain is uncharacterized protein (46 aa).

The helical transmembrane segment at 20 to 42 (MAMIWVVAALVIALVVGTALNYI) threads the bilayer.

It localises to the membrane. This is an uncharacterized protein from Bacillus subtilis (strain 168).